Here is a 176-residue protein sequence, read N- to C-terminus: NAD(P)H-quinone oxidoreductase subunit 6, chloroplastic (176 aa).

5 consecutive transmembrane segments (helical) span residues 10–30 (FLLVFLGSGLLVGGLGVVLLP), 32–52 (PIFSAFSLGFVLVCISLLYIL), 61–81 (AQLLIYVGAINVLIIFAVMFM), 92–112 (LWTVGNGITSLVCTTILFLLM), and 152–172 (FFLPFELISIILLVALIGAIS).

It belongs to the complex I subunit 6 family. In terms of assembly, NDH is composed of at least 16 different subunits, 5 of which are encoded in the nucleus.

Its subcellular location is the plastid. The protein localises to the chloroplast thylakoid membrane. It carries out the reaction a plastoquinone + NADH + (n+1) H(+)(in) = a plastoquinol + NAD(+) + n H(+)(out). The catalysed reaction is a plastoquinone + NADPH + (n+1) H(+)(in) = a plastoquinol + NADP(+) + n H(+)(out). Its function is as follows. NDH shuttles electrons from NAD(P)H:plastoquinone, via FMN and iron-sulfur (Fe-S) centers, to quinones in the photosynthetic chain and possibly in a chloroplast respiratory chain. The immediate electron acceptor for the enzyme in this species is believed to be plastoquinone. Couples the redox reaction to proton translocation, and thus conserves the redox energy in a proton gradient. The chain is NAD(P)H-quinone oxidoreductase subunit 6, chloroplastic (ndhG) from Olimarabidopsis pumila (Dwarf rocket).